We begin with the raw amino-acid sequence, 310 residues long: Haloalkane dehalogenase (310 aa).

The region spanning Val49 to Gly295 is the AB hydrolase-1 domain. The Nucleophile role is filled by Asp124. Positions 125 and 175 each coordinate chloride. Asp260 (proton donor) is an active-site residue. His289 acts as the Proton acceptor in catalysis.

The protein belongs to the haloalkane dehalogenase family. Type 1 subfamily. Monomer.

The enzyme catalyses 1-haloalkane + H2O = a halide anion + a primary alcohol + H(+). It catalyses the reaction 1,2-dichloroethane + H2O = 2-chloroethanol + chloride + H(+). It functions in the pathway xenobiotic degradation; 1,2-dichloroethane degradation; glycolate from 1,2-dichloroethane: step 1/4. Its activity is regulated as follows. Inhibited by thiol reagents such as p-chloromercuribenzoate and iodoacetamide. In terms of biological role, catalyzes hydrolytic cleavage of carbon-halogen bonds in halogenated aliphatic compounds, leading to the formation of the corresponding primary alcohols, halide ions and protons. Has a broad substrate specificity, which includes terminally mono- and di- chlorinated and brominated alkanes (up to C4 only). The highest activity was found with 1,2-dichloroethane, 1,3-dichloropropane, and 1,2-dibromoethane. In Xanthobacter autotrophicus, this protein is Haloalkane dehalogenase (dhlA).